Here is a 210-residue protein sequence, read N- to C-terminus: Large ribosomal subunit protein uL4 (210 aa).

Residues 46–77 (QGTHKSKERGEIAGSTKKIKKQKGTGTARAGS) form a disordered region.

Belongs to the universal ribosomal protein uL4 family. In terms of assembly, part of the 50S ribosomal subunit.

Functionally, one of the primary rRNA binding proteins, this protein initially binds near the 5'-end of the 23S rRNA. It is important during the early stages of 50S assembly. It makes multiple contacts with different domains of the 23S rRNA in the assembled 50S subunit and ribosome. In terms of biological role, forms part of the polypeptide exit tunnel. The polypeptide is Large ribosomal subunit protein uL4 (Amoebophilus asiaticus (strain 5a2)).